We begin with the raw amino-acid sequence, 393 residues long: Interleukin-1 receptor type 2 (393 aa).

The N-terminal stretch at 1-13 (MFRLYVLVMGVSA) is a signal peptide. Residues 14 to 347 (FTLQPAAHTG…RTTVKEPPPT (334 aa)) are Extracellular-facing. 3 cysteine pairs are disulfide-bonded: Cys28–Cys116, Cys50–Cys108, and Cys152–Cys207. Ig-like C2-type domains lie at 29 to 120 (PVRG…DKVS), 134 to 221 (PFIS…YNIT), and 237 to 342 (PVII…TTVK). N-linked (GlcNAc...) asparagine glycans are attached at residues Asn66, Asn72, and Asn112. 2 N-linked (GlcNAc...) asparagine glycosylation sites follow: Asn219 and Asn277. Cys258 and Cys326 form a disulfide bridge. Residues 348-368 (FSWGIVLAPLALAFLVLGGIW) form a helical membrane-spanning segment. Residues 369–393 (MHRRCKHRTGKADGLTVLRPHHQDF) lie on the Cytoplasmic side of the membrane.

Belongs to the interleukin-1 receptor family. As to quaternary structure, forms a non-signaling receptor complex consisting of IL1R2 and IL1RAP. Post-translationally, a soluble form (sIL1R2) can also be produced by proteolytic cleavage at the cell surface (shedding) involving a metalloproteinase.

The protein resides in the secreted. It is found in the cell membrane. Its function is as follows. Non-signaling receptor for IL1A, IL1B and IL1RN. Reduces IL1B activities. Serves as a decoy receptor by competitive binding to IL1B and preventing its binding to IL1R1. Also modulates cellular response through non-signaling association with IL1RAP after binding to IL1B. IL1R2 (membrane and secreted forms) preferentially binds IL1B and poorly IL1A and IL1RN. The secreted IL1R2 recruits secreted IL1RAP with high affinity; this complex formation may be the dominant mechanism for neutralization of IL1B by secreted/soluble receptors. In Chlorocebus aethiops (Green monkey), this protein is Interleukin-1 receptor type 2 (IL1R2).